A 700-amino-acid chain; its full sequence is Acetoacetyl-CoA synthetase (700 aa).

Positions 1–35 (MTAVSANGKTTEKHENGAHTNGTTNGTTNGSMNGN) are disordered. The span at 18–35 (AHTNGTTNGTTNGSMNGN) shows a compositional bias: low complexity.

The protein belongs to the ATP-dependent AMP-binding enzyme family. Present in most cells of the organism.

The protein resides in the cytoplasm. It is found in the nucleus. It catalyses the reaction acetoacetate + ATP + CoA = acetoacetyl-CoA + AMP + diphosphate. In terms of biological role, activates acetoacetate to acetoacetyl-CoA. Negatively regulates let-60 Ras activity during vulval induction. The chain is Acetoacetyl-CoA synthetase (sur-5) from Caenorhabditis elegans.